A 181-amino-acid chain; its full sequence is TATA-box-binding protein (181 aa).

Tandem repeats lie at residues 7-83 and 98-173.

This sequence belongs to the TBP family.

General factor that plays a role in the activation of archaeal genes transcribed by RNA polymerase. Binds specifically to the TATA box promoter element which lies close to the position of transcription initiation. This Methanococcus maripaludis (strain C7 / ATCC BAA-1331) protein is TATA-box-binding protein.